The following is a 302-amino-acid chain: Pseudouridine-5'-phosphate glycosidase (302 aa).

E25 (proton donor) is an active-site residue. 2 residues coordinate substrate: K86 and V106. D138 contributes to the Mn(2+) binding site. 140-142 (SAD) lines the substrate pocket. The active-site Nucleophile is K159.

Belongs to the pseudouridine-5'-phosphate glycosidase family. Homotrimer. Requires Mn(2+) as cofactor.

The enzyme catalyses D-ribose 5-phosphate + uracil = psi-UMP + H2O. Catalyzes the reversible cleavage of pseudouridine 5'-phosphate (PsiMP) to ribose 5-phosphate and uracil. Functions biologically in the cleavage direction, as part of a pseudouridine degradation pathway. The protein is Pseudouridine-5'-phosphate glycosidase of Jannaschia sp. (strain CCS1).